The chain runs to 453 residues: T-box transcription factor T homolog (453 aa).

Residues 47 to 217 (LWRRFSKLTN…YNPFAKAFLD (171 aa)) constitute a DNA-binding region (T-box). The tract at residues 283-304 (RSHRSTPYPPPPYEQKYSPTSA) is disordered.

Its subcellular location is the nucleus. In terms of biological role, may be involved in the transcriptional regulation of genes required for gastrulation. The sequence is that of T-box transcription factor T homolog from Patiria pectinifera (Starfish).